Consider the following 102-residue polypeptide: Glutaredoxin 1 (102 aa).

Residues 1-96 (MNKAILHTII…KLLEGQPKKK (96 aa)) enclose the Glutaredoxin domain. Residues Cys17 and Cys20 are joined by a disulfide bond.

The protein belongs to the glutaredoxin family. Monomer.

It is found in the cytoplasm. Has a glutathione-disulfide oxidoreductase activity in the presence of NADPH and glutathione reductase. Reduces low molecular weight disulfides and proteins. This Rickettsia felis (strain ATCC VR-1525 / URRWXCal2) (Rickettsia azadi) protein is Glutaredoxin 1 (grxC1).